Here is a 287-residue protein sequence, read N- to C-terminus: Glutamate racemase (287 aa).

Residues 32 to 33 (DS) and 64 to 65 (YG) each bind substrate. Cys-96 functions as the Proton donor/acceptor in the catalytic mechanism. 97-98 (NT) contributes to the substrate binding site. Cys-208 acts as the Proton donor/acceptor in catalysis. 209 to 210 (TH) contributes to the substrate binding site.

Belongs to the aspartate/glutamate racemases family.

It carries out the reaction L-glutamate = D-glutamate. Its pathway is cell wall biogenesis; peptidoglycan biosynthesis. Its function is as follows. Provides the (R)-glutamate required for cell wall biosynthesis. In Photorhabdus laumondii subsp. laumondii (strain DSM 15139 / CIP 105565 / TT01) (Photorhabdus luminescens subsp. laumondii), this protein is Glutamate racemase.